The following is a 268-amino-acid chain: Small ribosomal subunit protein eS1 (268 aa).

The disordered stretch occupies residues 1 to 21; sequence MAVGKNKGLSKGGKKGGKKKV.

The protein belongs to the eukaryotic ribosomal protein eS1 family. Component of the small ribosomal subunit. Mature ribosomes consist of a small (40S) and a large (60S) subunit. The 40S subunit contains about 33 different proteins and 1 molecule of RNA (18S). The 60S subunit contains about 49 different proteins and 3 molecules of RNA (28S, 5.8S and 5S).

It localises to the cytoplasm. Functionally, essential for oogenesis; required for late follicle cell development. The protein is Small ribosomal subunit protein eS1 of Drosophila willistoni (Fruit fly).